The following is a 40-amino-acid chain: Beta/delta-ctenitoxin-Pr1a (40 aa).

Intrachain disulfides connect cysteine 1–cysteine 15, cysteine 8–cysteine 21, cysteine 14–cysteine 31, and cysteine 23–cysteine 29.

Belongs to the neurotoxin 03 (Tx2) family. 05 subfamily. Expressed by the venom gland.

It is found in the secreted. Its function is as follows. Potent insecticidal toxin that binds to two distinct sites in insect sodium channels, with close affinity (Kd1=34.7 pM and Kd2=35.1 pM). Its association is rather fast (1.4 and 8.5 minutes, respectively for sites 1 and 2) and its dissociation is a slower process (5.4 and 32.8 minutes, respectively). On rat brain synaptosomes the toxin partially competes (~30%) with the beta-toxin CssIV, but does not compete with the alpha-toxin AaII, nor with the beta-toxin Ts VII. On cockroach nerve cord synaptosomes, the toxin does not compete with the anti-insect toxin LqqIT1, but it competes with the 'alpha-like' toxin BomIV (IC(50)=80 pM). In cockroach neurons, the toxin inhibits the inactivation of sodium channels and it shifts the sodium channel activation to hyperpolarizing potentials. Hence, it behaves like an 'alpha-like' toxin and binds preferentially to site 3 on the insect Nav channel, located on the domain IV. The toxin may also inhibit the N-methyl-D-aspartate (NMDA)-subtype of ionotropic glutamate receptor (GRIN). In vivo, the toxin causes excitatory effects on insects. In Phoneutria reidyi (Brazilian Amazonian armed spider), this protein is Beta/delta-ctenitoxin-Pr1a.